The following is a 314-amino-acid chain: Ferredoxin:CoB-CoM heterodisulfide reductase subunit B (314 aa).

It belongs to the HdrB family. The ferredoxin:CoB-CoM heterodisulfide reductase is composed of three subunits; HdrA1, HdrB1 and HdrC1. [4Fe-4S] cluster serves as cofactor.

It localises to the cytoplasm. It carries out the reaction coenzyme B + coenzyme M + 2 oxidized [2Fe-2S]-[ferredoxin] = coenzyme M-coenzyme B heterodisulfide + 2 reduced [2Fe-2S]-[ferredoxin] + 2 H(+). Its pathway is cofactor metabolism; coenzyme M-coenzyme B heterodisulfide reduction; coenzyme B and coenzyme M from coenzyme M-coenzyme B heterodisulfide: step 1/1. Its function is as follows. Part of a complex that catalyzes the reversible reduction of CoM-S-S-CoB to the thiol-coenzymes H-S-CoM (coenzyme M) and H-S-CoB (coenzyme B). Probably involved in methylotrophic methanogenesis but not in aceticlastic methanogenesis. The chain is Ferredoxin:CoB-CoM heterodisulfide reductase subunit B from Methanosarcina acetivorans (strain ATCC 35395 / DSM 2834 / JCM 12185 / C2A).